A 463-amino-acid polypeptide reads, in one-letter code: D(2)-like dopamine receptor (463 aa).

The Extracellular portion of the chain corresponds to 1-35 (MDVFTQYAYNDSIFDNGTWSANETTKDETHPYNYY). Residues N10, N16, and N22 are each glycosylated (N-linked (GlcNAc...) asparagine). The helical transmembrane segment at 36–58 (AMLLTLLIFVIVFGNVLVCMAVS) threads the bilayer. Over 59 to 68 (REKALQTTTN) the chain is Cytoplasmic. Residues 69 to 91 (YLIVSLAVADLLVATLVMPWVVY) form a helical membrane-spanning segment. The Extracellular segment spans residues 92-106 (LEVVGEWRFSKIHCD). C105 and C183 are oxidised to a cystine. Residues 107–128 (IFVTLDVMMCTASILNLCAISI) form a helical membrane-spanning segment. The Cytoplasmic segment spans residues 129–149 (DRYTAVAMPMLYNTRYSSRRR). Residues 150 to 170 (VTVMISVVWVLSFAISCPLLF) form a helical membrane-spanning segment. The Extracellular portion of the chain corresponds to 171–189 (GLNNTATRDQSLCFIANPA). The chain crosses the membrane as a helical span at residues 190-214 (FVVYSSIVSFYVPFIVTLLVYVQIY). The Cytoplasmic portion of the chain corresponds to 215–392 (VVLRKRRKRV…SQQKEKKATQ (178 aa)). The segment at 295 to 362 (CGGSHKQPPP…KEAQGNPAPV (68 aa)) is disordered. Residues 315–329 (PATSHQLLMSTKANA) are compositionally biased toward polar residues. The span at 341–353 (EGQRTEKNGDPTK) shows a compositional bias: basic and acidic residues. A helical transmembrane segment spans residues 393 to 414 (MLAIVLGVFIICWLPFFITHIL). Residues 415 to 429 (NTHCTRCKVPAEMYN) are Extracellular-facing. The cysteines at positions 418 and 421 are disulfide-linked. The chain crosses the membrane as a helical span at residues 430-451 (AFTWLGYVNSAVNPIIYTTFNV). Residues 452–463 (EFRKAFIKILHC) lie on the Cytoplasmic side of the membrane.

It belongs to the G-protein coupled receptor 1 family.

The protein localises to the cell membrane. Receptor for dopamine. In Takifugu rubripes (Japanese pufferfish), this protein is D(2)-like dopamine receptor (d215).